The chain runs to 230 residues: Ribonuclease HII (230 aa).

In terms of domain architecture, RNase H type-2 spans G21–G212. A divalent metal cation contacts are provided by D27, E28, and D121.

This sequence belongs to the RNase HII family. Mn(2+) is required as a cofactor. Mg(2+) serves as cofactor.

The protein resides in the cytoplasm. It catalyses the reaction Endonucleolytic cleavage to 5'-phosphomonoester.. Its function is as follows. Endonuclease that specifically degrades the RNA of RNA-DNA hybrids. This Mycobacterium avium (strain 104) protein is Ribonuclease HII.